Here is a 455-residue protein sequence, read N- to C-terminus: Tubulin alpha-1 chain (455 aa).

The GTP site is built by glutamine 11, glutamate 75, serine 144, glycine 148, threonine 149, threonine 183, asparagine 210, and asparagine 232. Residue glutamate 75 coordinates Mg(2+). Glutamate 258 is a catalytic residue.

It belongs to the tubulin family. As to quaternary structure, dimer of alpha and beta chains. A typical microtubule is a hollow water-filled tube with an outer diameter of 25 nm and an inner diameter of 15 nM. Alpha-beta heterodimers associate head-to-tail to form protofilaments running lengthwise along the microtubule wall with the beta-tubulin subunit facing the microtubule plus end conferring a structural polarity. Microtubules usually have 13 protofilaments but different protofilament numbers can be found in some organisms and specialized cells. Requires Mg(2+) as cofactor.

It localises to the cytoplasm. The protein localises to the cytoskeleton. It catalyses the reaction GTP + H2O = GDP + phosphate + H(+). Functionally, tubulin is the major constituent of microtubules, a cylinder consisting of laterally associated linear protofilaments composed of alpha- and beta-tubulin heterodimers. Microtubules grow by the addition of GTP-tubulin dimers to the microtubule end, where a stabilizing cap forms. Below the cap, tubulin dimers are in GDP-bound state, owing to GTPase activity of alpha-tubulin. The sequence is that of Tubulin alpha-1 chain (nda2) from Schizosaccharomyces pombe (strain 972 / ATCC 24843) (Fission yeast).